The primary structure comprises 301 residues: Putative MgpC-like protein MPN_093 (301 aa).

The protein belongs to the MgpC family.

The protein is Putative MgpC-like protein MPN_093 of Mycoplasma pneumoniae (strain ATCC 29342 / M129 / Subtype 1) (Mycoplasmoides pneumoniae).